Reading from the N-terminus, the 997-residue chain is Translation initiation factor IF-2 (997 aa).

The tract at residues 101–409 (ELAAEQAAAR…QHQDRRHEQV (309 aa)) is disordered. Low complexity-rich tracts occupy residues 116 to 185 (AEAV…QAEP), 195 to 208 (AAPA…VEPA), and 244 to 280 (PSAP…PAAP). Residues 281–292 (DRAREEARRAAE) show a composition bias toward basic and acidic residues. Over residues 385-394 (RAGGKGGRGG) the composition is skewed to gly residues. A compositionally biased stretch (basic and acidic residues) spans 400–409 (QHQDRRHEQV). A tr-type G domain is found at 498 to 665 (PRAPVVTVMG…NVLLQAEILE (168 aa)). The tract at residues 507-514 (GHVDHGKT) is G1. 507–514 (GHVDHGKT) serves as a coordination point for GTP. The segment at 532 to 536 (GITQH) is G2. Residues 553–556 (DTPG) form a G3 region. GTP is bound by residues 553–557 (DTPGH) and 607–610 (NKID). Residues 607–610 (NKID) are G4. The segment at 643 to 645 (SAK) is G5.

It belongs to the TRAFAC class translation factor GTPase superfamily. Classic translation factor GTPase family. IF-2 subfamily.

The protein resides in the cytoplasm. Functionally, one of the essential components for the initiation of protein synthesis. Protects formylmethionyl-tRNA from spontaneous hydrolysis and promotes its binding to the 30S ribosomal subunits. Also involved in the hydrolysis of GTP during the formation of the 70S ribosomal complex. This chain is Translation initiation factor IF-2, found in Bordetella bronchiseptica (strain ATCC BAA-588 / NCTC 13252 / RB50) (Alcaligenes bronchisepticus).